Consider the following 355-residue polypeptide: Uroporphyrinogen decarboxylase (355 aa).

Substrate-binding positions include 27–31, aspartate 78, tyrosine 155, serine 210, and histidine 328; that span reads RQAGR.

The protein belongs to the uroporphyrinogen decarboxylase family. As to quaternary structure, homodimer.

The protein localises to the cytoplasm. It catalyses the reaction uroporphyrinogen III + 4 H(+) = coproporphyrinogen III + 4 CO2. Its pathway is porphyrin-containing compound metabolism; protoporphyrin-IX biosynthesis; coproporphyrinogen-III from 5-aminolevulinate: step 4/4. Catalyzes the decarboxylation of four acetate groups of uroporphyrinogen-III to yield coproporphyrinogen-III. This Pseudomonas aeruginosa (strain UCBPP-PA14) protein is Uroporphyrinogen decarboxylase.